Consider the following 203-residue polypeptide: Superoxide dismutase [Mn] (203 aa).

Mn(2+) is bound by residues His-27, His-81, Asp-164, and His-168.

Belongs to the iron/manganese superoxide dismutase family. In terms of assembly, homodimer. It depends on Mn(2+) as a cofactor.

It catalyses the reaction 2 superoxide + 2 H(+) = H2O2 + O2. Its function is as follows. Destroys superoxide anion radicals which are normally produced within the cells and which are toxic to biological systems. In Pseudomonas putida (Arthrobacter siderocapsulatus), this protein is Superoxide dismutase [Mn] (sodA).